Here is a 299-residue protein sequence, read N- to C-terminus: Palmitoyltransferase ZDHHC3 (299 aa).

Residues 1–47 are Cytoplasmic-facing; sequence MMLIPTHHFRNIERKPEYLQPEKCVPPPYPGPVGTMWFIRDGCGIAC. The residue at position 18 (tyrosine 18) is a Phosphotyrosine. A helical transmembrane segment spans residues 48 to 68; it reads AIVTWFLVLYAEFVVLFVMLI. Residues 69–72 lie on the Extracellular side of the membrane; that stretch reads PSRD. A helical membrane pass occupies residues 73–93; the sequence is YVYSIINGIVFNLLAFLALAS. The Cytoplasmic segment spans residues 94 to 171; it reads HCRAMLTDPG…NCVGENNQKY (78 aa). A DHHC domain is found at 127-177; the sequence is YKCPKCCSIKPDRAHHCSVCKRCIRKMDHHCPWVNNCVGENNQKYFVLFTM. Cysteine 146 carries the S-palmitoyl cysteine lipid modification. Cysteine 157 acts as the S-palmitoyl cysteine intermediate in catalysis. A helical transmembrane segment spans residues 172–192; sequence FVLFTMYIALISLHALIMVGF. Over 193-214 the chain is Extracellular; the sequence is HFLHCFEEDWTKCSSFSPPTTV. A helical membrane pass occupies residues 215 to 235; that stretch reads ILLILLCFEGLLFLIFTSVMF. Residues 236-299 are Cytoplasmic-facing; that stretch reads GTQVHSICTD…GKADPYQYVV (64 aa).

It belongs to the DHHC palmitoyltransferase family. As to quaternary structure, monomer. Homooligomers. The monomeric form has a higher catalytic activity. Forms heterooligomers with ZDHHC7. Interacts with TNFRSF10A. In terms of processing, autopalmitoylated. Post-translationally, phosphorylation by FGFR1 and SRC probably regulates the palmitoyltransferase activity. Widely expressed with significant expression in heart, lung, liver, skeletal muscle, kidney, testis, thymus, small intestine and leukocyte.

The protein localises to the golgi apparatus membrane. It carries out the reaction L-cysteinyl-[protein] + hexadecanoyl-CoA = S-hexadecanoyl-L-cysteinyl-[protein] + CoA. It catalyses the reaction L-cysteinyl-[protein] + tetradecanoyl-CoA = S-tetradecanoyl-L-cysteinyl-[protein] + CoA. The catalysed reaction is L-cysteinyl-[protein] + octadecanoyl-CoA = S-octadecanoyl-L-cysteinyl-[protein] + CoA. In terms of biological role, golgi-localized palmitoyltransferase that catalyzes the addition of palmitate onto various protein substrates. Has no stringent fatty acid selectivity and in addition to palmitate can also transfer onto target proteins myristate from tetradecanoyl-CoA and stearate from octadecanoyl-CoA. Plays an important role in G protein-coupled receptor signaling pathways involving GNAQ and potentially other heterotrimeric G proteins by regulating their dynamic association with the plasma membrane. Palmitoylates ITGA6 and ITGB4, thereby regulating the alpha-6/beta-4 integrin localization, expression and function in cell adhesion to laminin. Plays a role in the TRAIL-activated apoptotic signaling pathway most probably through the palmitoylation and localization to the plasma membrane of TNFRSF10A. In the brain, by palmitoylating the gamma subunit GABRG2 of GABA(A) receptors and regulating their postsynaptic accumulation, plays a role in synaptic GABAergic inhibitory function and GABAergic innervation. Palmitoylates the neuronal protein GAP43 which is also involved in the formation of GABAergic synapses. Palmitoylates NCDN thereby regulating its association with endosome membranes. Probably palmitoylates PRCD and is involved in its proper localization within the photoreceptor. Could mediate the palmitoylation of NCAM1 and regulate neurite outgrowth. Could palmitoylate DNAJC5 and regulate its localization to Golgi membranes. Also constitutively palmitoylates DLG4. May also palmitoylate SNAP25. Could palmitoylate the glutamate receptors GRIA1 and GRIA2 but this has not been confirmed in vivo. Could also palmitoylate the D(2) dopamine receptor DRD2. May also palmitoylate LAMTOR1, promoting its localization to lysosomal membranes. Palmitoylates the Toll-like receptor 9/TLR9 in the Golgi and thereby regulates TLR9 trafficking to endosomes. May palmitoylate CALHM1 and CALHM3 subunits of gustatory voltage-gated ion channels and modulate channel gating and kinetics. May also function as a calcium transporter. In Homo sapiens (Human), this protein is Palmitoyltransferase ZDHHC3.